The following is a 447-amino-acid chain: Clusterin (447 aa).

Residues 1-21 form the signal peptide; the sequence is MKILLLCVALLLTWDNGMVLG. Residues 77–80 carry the Nuclear localization signal motif; that stretch reads KKKK. Intrachain disulfides connect C101-C312, C112-C304, C115-C301, C120-C294, and C128-C284. N102 carries an N-linked (GlcNAc...) asparagine glycan. Position 132 is a phosphoserine (S132). N-linked (GlcNAc...) asparagine glycosylation is found at N144, N290, N327, N353, and N373. S394 carries the post-translational modification Phosphoserine. Residues 441-445 carry the Nuclear localization signal motif; the sequence is RRKSR.

Belongs to the clusterin family. As to quaternary structure, antiparallel disulfide-linked heterodimer of an alpha chain and a beta chain. Self-associates and forms higher oligomers. Interacts with a broad range of misfolded proteins, including APP, APOC2 and LYZ. Slightly acidic pH promotes interaction with misfolded proteins. Forms high-molecular weight oligomers upon interaction with misfolded proteins. Interacts with APOA1, LRP2, CLUAP1 and PON1. Interacts with the complement membrane attack complex. Interacts (via alpha chain) with XRCC6. Interacts with SYVN1, COMMD1, BTRC, CUL1 and with ubiquitin and SCF (SKP1-CUL1-F-box protein) E3 ubiquitin-protein ligase complexes. Interacts (via alpha chain) with BAX in stressed cells, where BAX undergoes a conformation change leading to association with the mitochondrial membrane. Does not interact with BAX in unstressed cells. Found in a complex with LTF, CLU, EPPIN and SEMG1. Interacts (immaturely glycosylated pre-secreted form) with HSPA5; this interaction promotes CLU stability and facilitates stress-induced CLU retrotranslocation from the secretory pathway to the mitochondria, thereby reducing stress-induced apoptosis by stabilizing mitochondrial membrane integrity. Interacts with BCL2L1; this interaction releases and activates BAX and promotes cell death. Interacts with TGFBR2 and ACVR1. Interacts (secreted form) with STMN3; this interaction may act as an important modulator during neuronal differentiation. Interacts with VLDLR and LRP8. Proteolytically cleaved on its way through the secretory system, probably within the Golgi lumen. Proteolytic cleavage is not necessary for its chaperone activity. All non-secreted forms are not proteolytically cleaved. Chaperone activity of uncleaved forms is dependent on a non-reducing environment. In terms of processing, polyubiquitinated, leading to proteasomal degradation. Under cellular stress, the intracellular level of cleaved form is reduced due to proteasomal degradation. Post-translationally, extensively glycosylated with sulfated N-linked carbohydrates. About 30% of the protein mass is comprised of complex N-linked carbohydrate. Endoplasmic reticulum (ER) stress induces changes in glycosylation status and increases level of hypoglycosylated forms. Core carbohydrates are essential for chaperone activity. Non-secreted forms are hypoglycosylated or unglycosylated. As to expression, detected in Sertoli cells (at protein level). Detected in cultured Sertoli cells, testis, epididymis, liver and brain.

The protein resides in the secreted. It is found in the nucleus. The protein localises to the cytoplasm. Its subcellular location is the mitochondrion membrane. It localises to the cytosol. The protein resides in the microsome. It is found in the endoplasmic reticulum. The protein localises to the mitochondrion. Its subcellular location is the perinuclear region. It localises to the cytoplasmic vesicle. The protein resides in the secretory vesicle. It is found in the chromaffin granule. Functionally, functions as extracellular chaperone that prevents aggregation of non native proteins. Prevents stress-induced aggregation of blood plasma proteins. Inhibits formation of amyloid fibrils by APP, APOC2, B2M, CALCA, CSN3, SNCA and aggregation-prone LYZ variants (in vitro). Does not require ATP. Maintains partially unfolded proteins in a state appropriate for subsequent refolding by other chaperones, such as HSPA8/HSC70. Does not refold proteins by itself. Binding to cell surface receptors triggers internalization of the chaperone-client complex and subsequent lysosomal or proteasomal degradation. When secreted, protects cells against apoptosis and against cytolysis by complement: inhibits assembly of the complement membrane attack complex (MAC) by preventing polymerization of C9 pore component of the MAC complex. Intracellular forms interact with ubiquitin and SCF (SKP1-CUL1-F-box protein) E3 ubiquitin-protein ligase complexes and promote the ubiquitination and subsequent proteasomal degradation of target proteins. Promotes proteasomal degradation of COMMD1 and IKBKB. Modulates NF-kappa-B transcriptional activity. Following stress, promotes apoptosis. Inhibits apoptosis when associated with the mitochondrial membrane by interference with BAX-dependent release of cytochrome c into the cytoplasm. Plays a role in the regulation of cell proliferation. An intracellular form suppresses stress-induced apoptosis by stabilizing mitochondrial membrane integrity through interaction with HSPA5. Secreted form does not affect caspase or BAX-mediated intrinsic apoptosis and TNF-induced NF-kappa-B-activity. Secreted form act as an important modulator during neuronal differentiation through interaction with STMN3. Plays a role in the clearance of immune complexes that arise during cell injury. This chain is Clusterin, found in Rattus norvegicus (Rat).